The following is an 872-amino-acid chain: HTH-type transcriptional regulator AlkS (872 aa).

The HTH luxR-type domain maps to 805–870; the sequence is LTNTQSTITI…RAVSEARLRG (66 aa). The H-T-H motif DNA-binding region spans 829 to 848; sequence NKEIAERLLITEDTVKWHLK.

It functions in the pathway hydrocarbon metabolism; alkane degradation. In terms of biological role, this protein activates the expression of AlkB1 in the presence of alkanes. The sequence is that of HTH-type transcriptional regulator AlkS (alkS) from Alcanivorax borkumensis (strain ATCC 700651 / DSM 11573 / NCIMB 13689 / SK2).